Reading from the N-terminus, the 684-residue chain is Endo-1,4-beta-xylanase A (684 aa).

Residues 1 to 34 form the signal peptide; the sequence is MMRSLKSRKLVFILAMLFLINAIVSLKFITYSSA. CBM-cenC domains lie at 40 to 190 and 193 to 342; these read KSKY…IKDL and AYVL…ISDE. The 329-residue stretch at 350–678 folds into the GH10 domain; sequence DYNLPSLCEK…KFAFWSLIDP (329 aa). E490 acts as the Proton donor in catalysis. E598 serves as the catalytic Nucleophile.

This sequence belongs to the glycosyl hydrolase 10 (cellulase F) family.

It catalyses the reaction Endohydrolysis of (1-&gt;4)-beta-D-xylosidic linkages in xylans.. It functions in the pathway glycan degradation; xylan degradation. The polypeptide is Endo-1,4-beta-xylanase A (xynA) (Caldicellulosiruptor sp. (strain Rt8B.4)).